A 451-amino-acid chain; its full sequence is UDP-N-acetylmuramate--L-alanine ligase (451 aa).

Position 110-116 (110-116 (GTHGKTT)) interacts with ATP.

This sequence belongs to the MurCDEF family.

Its subcellular location is the cytoplasm. It catalyses the reaction UDP-N-acetyl-alpha-D-muramate + L-alanine + ATP = UDP-N-acetyl-alpha-D-muramoyl-L-alanine + ADP + phosphate + H(+). The protein operates within cell wall biogenesis; peptidoglycan biosynthesis. Functionally, cell wall formation. This chain is UDP-N-acetylmuramate--L-alanine ligase, found in Francisella tularensis subsp. mediasiatica (strain FSC147).